We begin with the raw amino-acid sequence, 367 residues long: Flagellar P-ring protein (367 aa).

The first 24 residues, 1 to 24 (MLRPIITLLCLTLMLCTAAGPAGA), serve as a signal peptide directing secretion.

This sequence belongs to the FlgI family. In terms of assembly, the basal body constitutes a major portion of the flagellar organelle and consists of four rings (L,P,S, and M) mounted on a central rod.

It localises to the periplasm. Its subcellular location is the bacterial flagellum basal body. Functionally, assembles around the rod to form the L-ring and probably protects the motor/basal body from shearing forces during rotation. The protein is Flagellar P-ring protein of Syntrophotalea carbinolica (strain DSM 2380 / NBRC 103641 / GraBd1) (Pelobacter carbinolicus).